We begin with the raw amino-acid sequence, 337 residues long: Ketol-acid reductoisomerase (NADP(+)) (337 aa).

One can recognise a KARI N-terminal Rossmann domain in the interval 1–180; that stretch reads MKIYYDTDVN…GGGRAGIIET (180 aa). Residues 24-27, Arg47, Ser51, and 81-84 contribute to the NADP(+) site; these read YGSQ and DELQ. His106 is an active-site residue. Residue Gly132 coordinates NADP(+). The KARI C-terminal knotted domain occupies 181–326; the sequence is TFKDETETDL…EKLRAMMPWL (146 aa). Mg(2+) is bound by residues Asp189, Glu193, Glu225, and Glu229. Ser250 is a substrate binding site.

Belongs to the ketol-acid reductoisomerase family. Mg(2+) serves as cofactor.

The catalysed reaction is (2R)-2,3-dihydroxy-3-methylbutanoate + NADP(+) = (2S)-2-acetolactate + NADPH + H(+). It catalyses the reaction (2R,3R)-2,3-dihydroxy-3-methylpentanoate + NADP(+) = (S)-2-ethyl-2-hydroxy-3-oxobutanoate + NADPH + H(+). It participates in amino-acid biosynthesis; L-isoleucine biosynthesis; L-isoleucine from 2-oxobutanoate: step 2/4. The protein operates within amino-acid biosynthesis; L-valine biosynthesis; L-valine from pyruvate: step 2/4. Functionally, involved in the biosynthesis of branched-chain amino acids (BCAA). Catalyzes an alkyl-migration followed by a ketol-acid reduction of (S)-2-acetolactate (S2AL) to yield (R)-2,3-dihydroxy-isovalerate. In the isomerase reaction, S2AL is rearranged via a Mg-dependent methyl migration to produce 3-hydroxy-3-methyl-2-ketobutyrate (HMKB). In the reductase reaction, this 2-ketoacid undergoes a metal-dependent reduction by NADPH to yield (R)-2,3-dihydroxy-isovalerate. This chain is Ketol-acid reductoisomerase (NADP(+)), found in Thermodesulfovibrio yellowstonii (strain ATCC 51303 / DSM 11347 / YP87).